Here is a 526-residue protein sequence, read N- to C-terminus: MNVDTTSPQAPLAGVESKQDGASNEATAKAESTTHDQNESSSFDERPVHSALSERQRSALLAVASFAAAISPASTTTYYPAITTLANDLDVSITQINLSLPAYQIFQGLAPTVAAAFSDRFGRRPVYLVSLSINMAANLGLALQKNYASLMVLRCLQSSSSGGTVALGQAVMDDLITSEERGRYMAYLTLGLVMGPALGPLIGGLLSQYLGWRAIFWFLMILGGFFFLMVLTFFRETNRSIVGDGSVPPQKWNRSLVQIFRKDKLIANPESLAKKRISVNPLASIQILRNKENFIVCMYGALLFGGYASVISIFATQLEERYGYSQVQVGLCYLPFGVGSILSRWTAGKMIDWNFKREADKQGFKIVKNRQQDLSRYDIEKARLTVSFPMIFATCGFVVAYGWLMQYDTHVASVLVVVFLIANVFTGVLIANSALLNDLNPGNGAALGAAMNLTRCLMGAGGVAAVTPLINKIGIGYTATATAGVWVVTLPALYLVYSKGYTWRKAALEASSQDRRENPDVASGSP.

The disordered stretch occupies residues 1-49 (MNVDTTSPQAPLAGVESKQDGASNEATAKAESTTHDQNESSSFDERPVH). Over residues 32-49 (STTHDQNESSSFDERPVH) the composition is skewed to basic and acidic residues. Asn-38 carries N-linked (GlcNAc...) asparagine glycosylation. The helical transmembrane segment at 59–79 (ALLAVASFAAAISPASTTTYY) threads the bilayer. An N-linked (GlcNAc...) asparagine glycan is attached at Asn-97. Helical transmembrane passes span 126–143 (VYLVSLSINMAANLGLAL), 186–206 (AYLTLGLVMGPALGPLIGGLL), and 214–234 (AIFWFLMILGGFFFLMVLTFF). N-linked (GlcNAc...) asparagine glycosylation is found at Asn-238 and Asn-253. 6 helical membrane-spanning segments follow: residues 294–314 (FIVCMYGALLFGGYASVISIF), 322–342 (YGYSQVQVGLCYLPFGVGSIL), 384–404 (LTVSFPMIFATCGFVVAYGWL), 411–431 (VASVLVVVFLIANVFTGVLIA), 446–466 (ALGAAMNLTRCLMGAGGVAAV), and 473–493 (IGIGYTATATAGVWVVTLPAL).

The protein belongs to the major facilitator superfamily.

Its subcellular location is the membrane. MFS-type transporter; part of the gene cluster that mediates the biosynthesis of squalestatin S1 (SQS1, also known as zaragozic acid A), a heavily oxidized fungal polyketide that offers potent cholesterol lowering activity by targeting squalene synthase (SS). The chain is MFS-type transporter clz19 from Cochliobolus lunatus (Filamentous fungus).